The primary structure comprises 297 residues: Ezy-1 protein (297 aa).

3 disordered regions span residues 1–34 (MAAV…GDGG), 115–151 (FTGK…SSSS), and 255–297 (QPAG…SPNM). The span at 123–135 (AEGDDGEDEEEGE) shows a compositional bias: acidic residues. Positions 136–150 (AQGVGKDAVDSSSSS) are enriched in low complexity. Positions 259-269 (DGHEPEPKRPE) are enriched in basic and acidic residues.

This Chlamydomonas reinhardtii (Chlamydomonas smithii) protein is Ezy-1 protein (Ezy-1).